Consider the following 3127-residue polypeptide: Probable polyketide synthase 33 (3127 aa).

Residues 24 to 457 (SGDVAVVGIG…GSNVCLILSE (434 aa)) enclose the Ketosynthase family 3 (KS3) domain. Residues Cys196, His335, and His380 each act as for beta-ketoacyl synthase activity in the active site. Residues 660 to 693 (GVSADIIIGHSLGEISSAYCSGMIDFQTLCYLTY) form an acyl/malonyl transferase region. The active-site For acyl/malonyl transferase activity is Ser670. An N-terminal hotdog fold region spans residues 958 to 1080 (GPSIHSLGNN…GNFSLFKHNI (123 aa)). A PKS/mFAS DH domain is found at 958–1257 (GPSIHSLGNN…CTIVGSNPDS (300 aa)). The active-site Proton acceptor; for dehydratase activity is the His992. A C-terminal hotdog fold region spans residues 1096–1257 (NFTTISKQDF…CTIVGSNPDS (162 aa)). The active-site Proton donor; for dehydratase activity is the Asp1168. Positions 1369–1394 (SNNNNNNNNNNNNNNNNNNNNKNNGY) are disordered. Residues 1370–1394 (NNNNNNNNNNNNNNNNNNNNKNNGY) show a composition bias toward low complexity. A Carrier domain is found at 2539–2616 (SNNEIIRSTI…QSIEIIKSAH (78 aa)). Residue Ser2576 is modified to O-(pantetheine 4'-phosphoryl)serine. Residues 2617–2659 (NKNNNNNNINNNNNNNNNNNNNNNNNNNNNNNNNNNNNNNNNN) form a disordered region. Residues 2617 to 2671 (NKNNNNNNINNNNNNNNNNNNNNNNNNNNNNNNNNNNNNNNNNLVKKEQQSLDEF) adopt a coiled-coil conformation. A helical transmembrane segment spans residues 2937-2957 (VLTLYNIPITIFIAILIIDIF).

Pantetheine 4'-phosphate is required as a cofactor.

It is found in the membrane. In terms of biological role, probable polyketide synthase. This Dictyostelium discoideum (Social amoeba) protein is Probable polyketide synthase 33 (pks33).